The chain runs to 705 residues: Translation factor GUF1 homolog, mitochondrial (705 aa).

Residues 1-20 (MVCHRYLLGLGASTLCLRRL) constitute a mitochondrion transit peptide. Positions 72 to 92 (PVEDNGTTNLTGTGEATSETG) are disordered. Residues 76-90 (NGTTNLTGTGEATSE) are compositionally biased toward polar residues. One can recognise a tr-type G domain in the interval 105-288 (NRMRNFCIIA…AVVERIPPPK (184 aa)). Residues 114-121 (AHVDHGKS), 181-185 (DTPGH), and 235-238 (NKID) each bind GTP.

Belongs to the TRAFAC class translation factor GTPase superfamily. Classic translation factor GTPase family. LepA subfamily.

It is found in the mitochondrion inner membrane. It carries out the reaction GTP + H2O = GDP + phosphate + H(+). Functionally, promotes mitochondrial protein synthesis. May act as a fidelity factor of the translation reaction, by catalyzing a one-codon backward translocation of tRNAs on improperly translocated ribosomes. Binds to mitochondrial ribosomes in a GTP-dependent manner. The sequence is that of Translation factor GUF1 homolog, mitochondrial from Babesia bovis.